A 522-amino-acid chain; its full sequence is Glucose-6-phosphate 1-dehydrogenase (522 aa).

NADP(+) contacts are provided by residues glycine 40–lysine 47, arginine 74, and lysine 177. D-glucose 6-phosphate-binding positions include lysine 177, histidine 207–lysine 211, glutamate 245, and aspartate 264. The Proton acceptor role is filled by histidine 269. Arginine 364 lines the NADP(+) pocket. Residues lysine 367 and lysine 372 each contribute to the D-glucose 6-phosphate site. NADP(+) contacts are provided by lysine 373, arginine 377, and arginine 401. Glutamine 403 serves as a coordination point for D-glucose 6-phosphate. NADP(+) contacts are provided by residues tyrosine 409–lysine 411, aspartate 429–threonine 431, arginine 495, and tryptophan 517.

This sequence belongs to the glucose-6-phosphate dehydrogenase family.

Its subcellular location is the cytoplasm. It is found in the cytosol. It carries out the reaction D-glucose 6-phosphate + NADP(+) = 6-phospho-D-glucono-1,5-lactone + NADPH + H(+). It participates in carbohydrate degradation; pentose phosphate pathway; D-ribulose 5-phosphate from D-glucose 6-phosphate (oxidative stage): step 1/3. Its function is as follows. Cytosolic glucose-6-phosphate dehydrogenase that catalyzes the first and rate-limiting step of the oxidative branch within the pentose phosphate pathway/shunt, an alternative route to glycolysis for the dissimilation of carbohydrates and a major source of reducing power and metabolic intermediates for fatty acid and nucleic acid biosynthetic processes. The sequence is that of Glucose-6-phosphate 1-dehydrogenase (gspd-1) from Caenorhabditis elegans.